Reading from the N-terminus, the 62-residue chain is Conotoxin TsMLCL-02 (62 aa).

Residues 1 to 19 (MLCLPVFIILLLLASPAAP) form the signal peptide. The propeptide occupies 20–54 (NPLERRIQSDLIRAALEDADMKTEKGILSSIMGTL).

The protein belongs to the conotoxin T superfamily. In terms of tissue distribution, expressed by the venom duct.

It is found in the secreted. The sequence is that of Conotoxin TsMLCL-02 from Conus tessulatus (Tessellate cone).